The chain runs to 98 residues: NADH-ubiquinone oxidoreductase chain 4L (98 aa).

The next 3 helical transmembrane spans lie at 1–21 (MTMVYANIFLAFITSLMGLLM), 29–49 (SLLCLEGMMLSLFVMMTVTIL), and 61–81 (IVLLVFAACEAALGLSLLVMV).

It belongs to the complex I subunit 4L family. As to quaternary structure, core subunit of respiratory chain NADH dehydrogenase (Complex I) which is composed of 45 different subunits.

The protein localises to the mitochondrion inner membrane. It catalyses the reaction a ubiquinone + NADH + 5 H(+)(in) = a ubiquinol + NAD(+) + 4 H(+)(out). Functionally, core subunit of the mitochondrial membrane respiratory chain NADH dehydrogenase (Complex I) which catalyzes electron transfer from NADH through the respiratory chain, using ubiquinone as an electron acceptor. Part of the enzyme membrane arm which is embedded in the lipid bilayer and involved in proton translocation. This chain is NADH-ubiquinone oxidoreductase chain 4L (MT-ND4L), found in Monachus monachus (Mediterranean monk seal).